The sequence spans 342 residues: Probable receptor-like protein kinase At4g10390 (342 aa).

One can recognise a Protein kinase domain in the interval 41 to 336 (SNFSRLIGSG…IKEIPSLSFL (296 aa)). ATP contacts are provided by residues 47 to 55 (IGSGGYSSI) and Lys-69. The Proton acceptor role is filled by Asp-165. 2 positions are modified to phosphoserine: Ser-169 and Ser-201. Tyr-220 carries the phosphotyrosine modification.

Belongs to the protein kinase superfamily. Ser/Thr protein kinase family.

The catalysed reaction is L-seryl-[protein] + ATP = O-phospho-L-seryl-[protein] + ADP + H(+). It catalyses the reaction L-threonyl-[protein] + ATP = O-phospho-L-threonyl-[protein] + ADP + H(+). The chain is Probable receptor-like protein kinase At4g10390 from Arabidopsis thaliana (Mouse-ear cress).